Consider the following 132-residue polypeptide: uncharacterized protein (132 aa).

4 consecutive transmembrane segments (helical) span residues 6 to 26, 34 to 54, 59 to 79, and 106 to 126; these read WIYA…RAFS, NTYL…GFLF, TMIT…SQLY, and IEAY…VLGI.

Its subcellular location is the cell membrane. This is an uncharacterized protein from Bacillus subtilis (strain 168).